The sequence spans 251 residues: GTP cyclohydrolase 1 type 2 homolog (251 aa).

5 residues coordinate a divalent metal cation: His-63, His-64, Asp-101, His-219, and Glu-223.

This sequence belongs to the GTP cyclohydrolase I type 2/NIF3 family. In terms of assembly, homohexamer.

The chain is GTP cyclohydrolase 1 type 2 homolog from Pasteurella multocida (strain Pm70).